We begin with the raw amino-acid sequence, 147 residues long: Putative pre-16S rRNA nuclease (147 aa).

This sequence belongs to the YqgF nuclease family.

The protein resides in the cytoplasm. Its function is as follows. Could be a nuclease involved in processing of the 5'-end of pre-16S rRNA. This chain is Putative pre-16S rRNA nuclease, found in Ureaplasma parvum serovar 3 (strain ATCC 27815 / 27 / NCTC 11736).